The following is a 449-amino-acid chain: Glucose-6-phosphate isomerase (449 aa).

Residue glutamate 291 is the Proton donor of the active site. Catalysis depends on residues histidine 312 and lysine 426.

The protein belongs to the GPI family.

The protein localises to the cytoplasm. It carries out the reaction alpha-D-glucose 6-phosphate = beta-D-fructose 6-phosphate. It functions in the pathway carbohydrate biosynthesis; gluconeogenesis. The protein operates within carbohydrate degradation; glycolysis; D-glyceraldehyde 3-phosphate and glycerone phosphate from D-glucose: step 2/4. Its function is as follows. Catalyzes the reversible isomerization of glucose-6-phosphate to fructose-6-phosphate. The polypeptide is Glucose-6-phosphate isomerase (Streptococcus mutans serotype c (strain ATCC 700610 / UA159)).